Consider the following 254-residue polypeptide: uncharacterized protein (254 aa).

This is an uncharacterized protein from Caenorhabditis elegans.